The sequence spans 499 residues: Terminase, large subunit (499 aa).

The segment at 1 to 58 (MELDAILDNLSDEEQIELLELLEEEENYRNTHLLYEFAPYSKQREFIDAGHDYPERCF) is interaction with the terminase small subunit. Residues 1–286 (MELDAILDNL…EHEREARARG (286 aa)) form an ATPase activity region. Residues 60–67 (AGNQLGKS) carry the Walker A motif motif. The Walker B motif signature appears at 199–204 (GVWFDE). Residue glutamate 204 is the For ATPase activity of the active site. Positions 312–482 (DHFYVIDAQD…FARMMRDIRK (171 aa)) are nuclease activity. 2 residues coordinate Mg(2+): aspartate 321 and aspartate 459.

This sequence belongs to the Lederbergvirus large terminase family. In terms of assembly, interacts with the terminase small subunit; the active complex is composed of dimer of terminase large subunits and a nonamer ring of terminase small subunits. Interacts with the portal protein; this interaction allows the packaging of viral DNA. Mg(2+) is required as a cofactor.

In terms of biological role, the terminase large subunit acts as an ATP driven molecular motor necessary for viral DNA translocation into empty capsids and as an endonuclease that cuts the viral genome to initiate and to end a packaging reaction. The terminase lies at a unique vertex of the procapsid and is composed of two subunits, a small terminase subunit involved in viral DNA recognition (packaging 'pac' sequence), and a large terminase subunit possessing endonucleolytic and ATPase activities. Both terminase subunits heterooligomerize and are docked on the portal protein to form the packaging machine. Once the capsid is packaged with the DNA (headful packaging), the terminase cleaves the viral genome concatemer and is substituted by the tail. This Salmonella phage P22 (Bacteriophage P22) protein is Terminase, large subunit (2).